The primary structure comprises 285 residues: uncharacterized protein (285 aa).

Positions 184-282 (HSICNWVQDN…GLTPGEYSAR (99 aa)) constitute an HTH araC/xylS-type domain. 2 consecutive DNA-binding regions (H-T-H motif) follow at residues 201–222 (ESVA…AQHG) and 249–272 (IHEV…RRQF).

This is an uncharacterized protein from Escherichia coli (strain K12).